We begin with the raw amino-acid sequence, 559 residues long: Thermosome subunit alpha (559 aa).

Residues 536–552 (SGEKKGEKKEGGEEEKS) show a composition bias toward basic and acidic residues. The segment at 536–559 (SGEKKGEKKEGGEEEKSSTPSSLE) is disordered.

It belongs to the TCP-1 chaperonin family. As to quaternary structure, forms a Heterooligomeric complex of two stacked nine-membered rings; one of alpha and the other of beta subunits.

Molecular chaperone; binds unfolded polypeptides in vitro, and has a weak ATPase activity. In Sulfurisphaera tokodaii (strain DSM 16993 / JCM 10545 / NBRC 100140 / 7) (Sulfolobus tokodaii), this protein is Thermosome subunit alpha (thsA).